The sequence spans 712 residues: Polyphosphate kinase (712 aa).

Asn-49 contributes to the ATP binding site. 2 residues coordinate Mg(2+): Arg-398 and Arg-428. The active-site Phosphohistidine intermediate is the His-458. ATP is bound by residues Tyr-491, Arg-587, and His-615.

It belongs to the polyphosphate kinase 1 (PPK1) family. The cofactor is Mg(2+). Post-translationally, an intermediate of this reaction is the autophosphorylated ppk in which a phosphate is covalently linked to a histidine residue through a N-P bond.

It catalyses the reaction [phosphate](n) + ATP = [phosphate](n+1) + ADP. Its function is as follows. Catalyzes the reversible transfer of the terminal phosphate of ATP to form a long-chain polyphosphate (polyP). This Prochlorococcus marinus (strain MIT 9313) protein is Polyphosphate kinase.